The chain runs to 498 residues: Zinc finger protein 682 (498 aa).

The region spanning 4 to 75 (LTFRDVTIEF…KRHETIAKPP (72 aa)) is the KRAB domain. 10 consecutive C2H2-type zinc fingers follow at residues 173 to 195 (FKCM…KIIH), 201 to 223 (CICE…KRIH), 229 to 251 (YKCE…KRIH), 257 to 279 (YKCE…KKIH), 285 to 307 (YTCE…KTIH), 313 to 335 (YKCK…ERTH), 341 to 363 (YKCE…KVIH), 369 to 391 (YKCE…KRIH), 397 to 419 (YKCE…KRIH), and 425 to 447 (YNCE…KKIH). The segment at 453–475 (YKCEECGKAFKRCSHLNEHKRVQ) adopts a C2H2-type 11; degenerate zinc-finger fold.

This sequence belongs to the krueppel C2H2-type zinc-finger protein family.

The protein resides in the nucleus. Its function is as follows. May be involved in transcriptional regulation. In Homo sapiens (Human), this protein is Zinc finger protein 682 (ZNF682).